Reading from the N-terminus, the 203-residue chain is Endo-type membrane-bound lytic murein transglycosylase A (203 aa).

The first 15 residues, 1–15 (MKLRWFAFLIVLLAG), serve as a signal peptide directing secretion. Cys-16 is lipidated: N-palmitoyl cysteine. Residue Cys-16 is the site of S-diacylglycerol cysteine attachment.

This sequence belongs to the transglycosylase Slt family.

The protein localises to the cell outer membrane. The catalysed reaction is Endolytic cleavage of the (1-&gt;4)-beta-glycosidic linkage between N-acetylmuramic acid (MurNAc) and N-acetylglucosamine (GlcNAc) residues in peptidoglycan with concomitant formation of a 1,6-anhydrobond in the MurNAc residue.. In terms of biological role, murein-degrading enzyme. May play a role in recycling of muropeptides during cell elongation and/or cell division. Preferentially cleaves at a distance of more than two disaccharide units from the ends of the glycan chain. In Shigella dysenteriae serotype 1 (strain Sd197), this protein is Endo-type membrane-bound lytic murein transglycosylase A.